The sequence spans 137 residues: Large ribosomal subunit protein eL28 (137 aa).

S2 carries the post-translational modification N-acetylserine. Glycyl lysine isopeptide (Lys-Gly) (interchain with G-Cter in SUMO2) cross-links involve residues K58 and K65. A Phosphoserine modification is found at S115.

This sequence belongs to the eukaryotic ribosomal protein eL28 family. In terms of assembly, component of the large ribosomal subunit.

It localises to the cytoplasm. Functionally, component of the large ribosomal subunit. The ribosome is a large ribonucleoprotein complex responsible for the synthesis of proteins in the cell. This is Large ribosomal subunit protein eL28 (RPL28) from Bos taurus (Bovine).